The primary structure comprises 435 residues: Sulfopropanediol 3-dehydrogenase (435 aa).

The NAD(+) site is built by tyrosine 119, glutamine 181, and asparagine 204. Residues glutamine 249 and histidine 252 each contribute to the Zn(2+) site. Residues glutamate 319 and histidine 320 each act as proton acceptor in the active site. Residues aspartate 353 and histidine 412 each coordinate Zn(2+).

The protein belongs to the histidinol dehydrogenase family. HpsN subfamily. The cofactor is Zn(2+).

The enzyme catalyses (2R)-3-sulfopropanediol + 2 NAD(+) + H2O = (2R)-3-sulfolactate + 2 NADH + 3 H(+). Catalyzes the NAD-dependent oxidation of (R)-2,3-dihydroxypropane-1-sulfonate to (R)-3-sulfolactate. This Ruegeria pomeroyi (strain ATCC 700808 / DSM 15171 / DSS-3) (Silicibacter pomeroyi) protein is Sulfopropanediol 3-dehydrogenase.